The sequence spans 450 residues: MNYLADTIAAIATAPGRGGVGVIRLSGRNLLPLAGQLSGGRQPRPRHALYTDFVASDGQAIDSGLLLYFPAPHSFTGEDVLELQGHGGPVILRMLLARCLELGARLAEPGEFTKRAFLNDKMDLVEAESVADLIDAQSETAARSALKSLKGAFSAEIHRLVDTLIDLRMLTEATLDFPEEDDVEWLEKADALGRLAAVRRQLATVLATARQGAILREGMHVVLVGQPNVGKSSLMNALAGDEIAIVTDIAGTTRDTVREQIVLDGVPLHIIDTAGLRETTDTVERIGIERTWQAVERADVVLLLVDGRDGVTAADAAILARLPERLPRVFVHNKIDLTGETAGVSEEDGHVVVRLSARGGAGVDALRQVLLEAVGWQGESEGLFLARERHLDAIRRAEAELEAAGQAYGLAAELFAEHLRQAQACLSEITGEFSADDLLGVIFSRFCIGK.

Residues arginine 24, glutamate 82, and lysine 121 each coordinate (6S)-5-formyl-5,6,7,8-tetrahydrofolate. In terms of domain architecture, TrmE-type G spans glycine 218–glycine 375. Asparagine 228 provides a ligand contact to K(+). GTP is bound by residues asparagine 228–serine 233, threonine 247–threonine 253, aspartate 272–glycine 275, and serine 356–arginine 358. Residue serine 232 participates in Mg(2+) binding. Positions 247, 249, and 252 each coordinate K(+). Residue threonine 253 coordinates Mg(2+). Lysine 450 serves as a coordination point for (6S)-5-formyl-5,6,7,8-tetrahydrofolate.

It belongs to the TRAFAC class TrmE-Era-EngA-EngB-Septin-like GTPase superfamily. TrmE GTPase family. As to quaternary structure, homodimer. Heterotetramer of two MnmE and two MnmG subunits. The cofactor is K(+).

The protein resides in the cytoplasm. Exhibits a very high intrinsic GTPase hydrolysis rate. Involved in the addition of a carboxymethylaminomethyl (cmnm) group at the wobble position (U34) of certain tRNAs, forming tRNA-cmnm(5)s(2)U34. In Laribacter hongkongensis (strain HLHK9), this protein is tRNA modification GTPase MnmE.